Consider the following 663-residue polypeptide: Translation factor GUF1, mitochondrial (663 aa).

Residues Met1–Ala44 constitute a mitochondrion transit peptide. Residues Glu65 to Val245 form the tr-type G domain. Residues Ala74–Ser81, Asp138–His142, and Asn192–Asp195 each bind GTP.

This sequence belongs to the TRAFAC class translation factor GTPase superfamily. Classic translation factor GTPase family. LepA subfamily.

The protein resides in the mitochondrion inner membrane. The enzyme catalyses GTP + H2O = GDP + phosphate + H(+). Its function is as follows. Promotes mitochondrial protein synthesis. May act as a fidelity factor of the translation reaction, by catalyzing a one-codon backward translocation of tRNAs on improperly translocated ribosomes. Binds to mitochondrial ribosomes in a GTP-dependent manner. This Coccidioides posadasii (strain C735) (Valley fever fungus) protein is Translation factor GUF1, mitochondrial.